The sequence spans 1226 residues: Integrin alpha pat-2 (1226 aa).

Positions 1 to 25 are cleaved as a signal peptide; sequence MREGSFPRRIGLLLGLLGLLAGVAT. Residues 26 to 1154 are Extracellular-facing; the sequence is FNIDTKNVVV…IASEEGRDLP (1129 aa). 7 FG-GAP repeats span residues 27 to 94, 108 to 171, 178 to 233, 234 to 290, 291 to 345, 362 to 421, and 425 to 488; these read NIDT…TCRE, NGSH…NAEE, EPAR…TDRP, NTEY…MMIN, LTDE…KPQY, GKQI…GVRE, and QKIE…PESA. N-linked (GlcNAc...) asparagine glycans are attached at residues asparagine 108, asparagine 228, and asparagine 290. The N-linked (GlcNAc...) asparagine glycan is linked to asparagine 608. Residues 620–622 carry the Cell attachment site motif; that stretch reads RGD. Asparagine 679 carries an N-linked (GlcNAc...) asparagine glycan. The disordered stretch occupies residues 709–733; the sequence is SVGGDGSKSAPACSPTSDEPDSDGK. N-linked (GlcNAc...) asparagine glycosylation is found at asparagine 775 and asparagine 819. Disordered stretches follow at residues 898-958 and 982-1040; these read LRIT…HVYE and DYEY…ARFS. A compositionally biased stretch (acidic residues) spans 920–931; sequence REEDDESYEDET. Positions 932 to 951 are enriched in low complexity; the sequence is TTQSQSTRHQSTQHQTHHQS. A compositionally biased stretch (acidic residues) spans 985 to 1005; it reads YIPDDQEYDGDDFEEEDDEDF. The span at 1010 to 1026 shows a compositional bias: basic residues; the sequence is SKRVKRNPTPKKKKKGG. The span at 1027–1040 shows a compositional bias: basic and acidic residues; it reads EHRGEPRSDKARFS. The helical transmembrane segment at 1155–1177 threads the bilayer; sequence WWLYLLAILIGLAILILLILLLW. Residues 1178–1226 lie on the Cytoplasmic side of the membrane; sequence RCGFFKRNRPPTEHAELRADRQPNAQYADSQSRYTSQDQYNQGRHGQML. Positions 1191–1226 are disordered; sequence HAELRADRQPNAQYADSQSRYTSQDQYNQGRHGQML. Residues 1200-1226 are compositionally biased toward polar residues; sequence PNAQYADSQSRYTSQDQYNQGRHGQML.

The protein belongs to the integrin alpha chain family. As to quaternary structure, heterodimer of an alpha and a beta subunit. Interacts with beta subunit pat-3. Interacts with dep-1. Component of an integrin containing attachment complex, composed of at least pat-2, pat-3, pat-4, pat-6, unc-52, unc-97 and unc-112. In terms of tissue distribution, expressed in body-wall muscle cells, distal tip cells, and vulval tissue.

The protein resides in the membrane. Its function is as follows. Required for muscle development probably through the regulation of the actin-myosin cytoskeleton. Component of an integrin containing attachment complex, which is required for muscle maintenance. During the formation of neuromuscular junctions at the larval stage, negatively regulates membrane protrusion from body wall muscles, probably through lamins such as epi-1, lam-2 and unc-52. Required for distal tip cell migration and dorsal pathfinding. Required for egg-laying. May play a role in cell motility and cell-cell interactions. Plays a role in vulval development. Probably within the alpha pat-2/beta pat-3 integrin receptor complex, plays a role in the negative regulation of let-23 signaling and vulval induction. This is probably partly by restricting the mobility of the let-23 receptor on the plasma membrane of vulval cells which thereby attenuates let-23 signaling. This is Integrin alpha pat-2 from Caenorhabditis elegans.